Consider the following 342-residue polypeptide: GTPase Obg (342 aa).

The 159-residue stretch at 1 to 159 (MKFLDEAKVY…MWIWLRLKLI (159 aa)) folds into the Obg domain. Positions 160–327 (ADAGLVGLPN…ALRALQTEID (168 aa)) constitute an OBG-type G domain. GTP-binding positions include 166-173 (GLPNAGKS), 191-195 (FTTLH), 212-215 (DIPG), 279-282 (SKAD), and 308-310 (SSA). Positions 173 and 193 each coordinate Mg(2+).

It belongs to the TRAFAC class OBG-HflX-like GTPase superfamily. OBG GTPase family. Monomer. The cofactor is Mg(2+).

It localises to the cytoplasm. In terms of biological role, an essential GTPase which binds GTP, GDP and possibly (p)ppGpp with moderate affinity, with high nucleotide exchange rates and a fairly low GTP hydrolysis rate. Plays a role in control of the cell cycle, stress response, ribosome biogenesis and in those bacteria that undergo differentiation, in morphogenesis control. In Methylobacterium radiotolerans (strain ATCC 27329 / DSM 1819 / JCM 2831 / NBRC 15690 / NCIMB 10815 / 0-1), this protein is GTPase Obg.